The following is a 416-amino-acid chain: S-adenosylmethionine synthase (416 aa).

His-14 is a binding site for ATP. A Mg(2+)-binding site is contributed by Asp-16. Position 42 (Glu-42) interacts with K(+). L-methionine is bound by residues Glu-55 and Gln-98. The interval 98–108 (QSADINQGVDR) is flexible loop. ATP-binding positions include 164-166 (DAK), 240-241 (KF), Asp-249, 255-256 (RK), Ala-272, and Lys-276. Asp-249 provides a ligand contact to L-methionine. Lys-280 provides a ligand contact to L-methionine.

It belongs to the AdoMet synthase family. In terms of assembly, homotetramer; dimer of dimers. It depends on Mg(2+) as a cofactor. K(+) serves as cofactor.

The protein resides in the cytoplasm. It catalyses the reaction L-methionine + ATP + H2O = S-adenosyl-L-methionine + phosphate + diphosphate. It participates in amino-acid biosynthesis; S-adenosyl-L-methionine biosynthesis; S-adenosyl-L-methionine from L-methionine: step 1/1. In terms of biological role, catalyzes the formation of S-adenosylmethionine (AdoMet) from methionine and ATP. The overall synthetic reaction is composed of two sequential steps, AdoMet formation and the subsequent tripolyphosphate hydrolysis which occurs prior to release of AdoMet from the enzyme. The polypeptide is S-adenosylmethionine synthase (Flavobacterium psychrophilum (strain ATCC 49511 / DSM 21280 / CIP 103535 / JIP02/86)).